The chain runs to 180 residues: Protein GrpE (180 aa).

A disordered region spans residues 1–25 (MSKKKAEDKQPIIKDEAVEEPKSDS).

The protein belongs to the GrpE family. As to quaternary structure, homodimer.

The protein localises to the cytoplasm. Participates actively in the response to hyperosmotic and heat shock by preventing the aggregation of stress-denatured proteins, in association with DnaK and GrpE. It is the nucleotide exchange factor for DnaK and may function as a thermosensor. Unfolded proteins bind initially to DnaJ; upon interaction with the DnaJ-bound protein, DnaK hydrolyzes its bound ATP, resulting in the formation of a stable complex. GrpE releases ADP from DnaK; ATP binding to DnaK triggers the release of the substrate protein, thus completing the reaction cycle. Several rounds of ATP-dependent interactions between DnaJ, DnaK and GrpE are required for fully efficient folding. The protein is Protein GrpE of Fructilactobacillus sanfranciscensis (Lactobacillus sanfranciscensis).